Here is a 353-residue protein sequence, read N- to C-terminus: Endophilin-A3 (353 aa).

Positions 1-21 are membrane-binding amphipathic helix; that stretch reads MSVAGLKKQFHKASQLFSEKI. The 232-residue stretch at 18–249 folds into the BAR domain; the sequence is SEKISGAEGT…LQNRINVASS (232 aa). The required for dimerization upon membrane association stretch occupies residues 60–87; the sequence is PNPAYRAKLGMLNTMSKIRGQVKTTGYP. Residues 180–201 are a coiled coil; that stretch reads DEEVKQAVEKFEESKELAERSM. Positions 218–254 are interaction with ARC; sequence FVEAALDYHKQSTEILEDLQSKLQNRINVASSRPKRE. Residues 291-350 form the SH3 domain; that stretch reads VDQPCCQALYDFEPENEGELGFKEGDIITLTNQIDENWYEGMLNGESGFFPHNYVEVMVP.

This sequence belongs to the endophilin family. In terms of assembly, interacts with ARC. Interacts with SYNJ1 and DNM1. In terms of tissue distribution, highest level in a region associated with endocytosis of yolk proteins in developing oocytes (at protein level). Highest level in small ovarian follicles. High levels in brain and testis. Lower level in adrenal glands.

The protein localises to the cytoplasm. The protein resides in the early endosome membrane. Implicated in endocytosis. May recruit other proteins to membranes with high curvature. Implicated in endocytosis of yolk proteins during oogenesis. The chain is Endophilin-A3 from Gallus gallus (Chicken).